Here is a 372-residue protein sequence, read N- to C-terminus: DNA primase small subunit PriS (372 aa).

Residues Asp95, Asp97, and Asp280 contribute to the active site.

This sequence belongs to the eukaryotic-type primase small subunit family. Heterodimer of a small subunit (PriS) and a large subunit (PriL). It depends on Mg(2+) as a cofactor. Requires Mn(2+) as cofactor.

Catalytic subunit of DNA primase, an RNA polymerase that catalyzes the synthesis of short RNA molecules used as primers for DNA polymerase during DNA replication. The small subunit contains the primase catalytic core and has DNA synthesis activity on its own. Binding to the large subunit stabilizes and modulates the activity, increasing the rate of DNA synthesis while decreasing the length of the DNA fragments, and conferring RNA synthesis capability. The DNA polymerase activity may enable DNA primase to also catalyze primer extension after primer synthesis. May also play a role in DNA repair. The polypeptide is DNA primase small subunit PriS (Cenarchaeum symbiosum (strain A)).